Consider the following 353-residue polypeptide: ATPase GET3 (353 aa).

26 to 33 lines the ATP pocket; sequence KGGVGKTT. Aspartate 57 is an active-site residue. ATP contacts are provided by glutamate 244 and asparagine 271. Residues cysteine 284 and cysteine 287 each contribute to the Zn(2+) site.

Belongs to the arsA ATPase family. As to quaternary structure, homodimer. Component of the Golgi to ER traffic (GET) complex, which is composed of GET1, GET2 and GET3. Within the complex, GET1 and GET2 form a heterotetramer which is stabilized by phosphatidylinositol binding and which binds to the GET3 homodimer. Interacts with the chloride channel protein GEF1.

It localises to the cytoplasm. The protein localises to the endoplasmic reticulum. It is found in the golgi apparatus. Its function is as follows. ATPase required for the post-translational delivery of tail-anchored (TA) proteins to the endoplasmic reticulum. Recognizes and selectively binds the transmembrane domain of TA proteins in the cytosol. This complex then targets to the endoplasmic reticulum by membrane-bound receptors GET1 and GET2, where the tail-anchored protein is released for insertion. This process is regulated by ATP binding and hydrolysis. ATP binding drives the homodimer towards the closed dimer state, facilitating recognition of newly synthesized TA membrane proteins. ATP hydrolysis is required for insertion. Subsequently, the homodimer reverts towards the open dimer state, lowering its affinity for the GET1-GET2 receptor, and returning it to the cytosol to initiate a new round of targeting. Cooperates with the HDEL receptor ERD2 to mediate the ATP-dependent retrieval of resident ER proteins that contain a C-terminal H-D-E-L retention signal from the Golgi to the ER. Involved in low-level resistance to the oxyanions arsenite and arsenate, and in heat tolerance. In Zygosaccharomyces rouxii (strain ATCC 2623 / CBS 732 / NBRC 1130 / NCYC 568 / NRRL Y-229), this protein is ATPase GET3.